Here is a 436-residue protein sequence, read N- to C-terminus: Adenylosuccinate synthetase (436 aa).

GTP is bound by residues 12–18 (GDEGKGK) and 40–42 (GHT). Residue Asp13 is the Proton acceptor of the active site. Residues Asp13 and Gly40 each contribute to the Mg(2+) site. IMP contacts are provided by residues 13 to 16 (DEGK), 38 to 41 (NAGH), Thr128, Arg142, Gln223, Thr238, and Arg302. Catalysis depends on His41, which acts as the Proton donor. 298-304 (TTTGRRR) is a substrate binding site. GTP is bound by residues Arg304, 330–332 (KLD), and 412–414 (SLG).

It belongs to the adenylosuccinate synthetase family. As to quaternary structure, homodimer. The cofactor is Mg(2+).

The protein resides in the cytoplasm. It catalyses the reaction IMP + L-aspartate + GTP = N(6)-(1,2-dicarboxyethyl)-AMP + GDP + phosphate + 2 H(+). It participates in purine metabolism; AMP biosynthesis via de novo pathway; AMP from IMP: step 1/2. Its function is as follows. Plays an important role in the de novo pathway of purine nucleotide biosynthesis. Catalyzes the first committed step in the biosynthesis of AMP from IMP. The sequence is that of Adenylosuccinate synthetase from Prochlorococcus marinus (strain MIT 9215).